The following is a 705-amino-acid chain: Calpain-1 catalytic subunit (705 aa).

In terms of domain architecture, Calpain catalytic spans 48–347 (LFRDPQFPAG…FSRLEICNLT (300 aa)). Residues Cys-108, His-265, and Asn-289 contribute to the active site. A domain III region spans residues 348–517 (PDALTKDELS…KQSDTAELDE (170 aa)). The interval 518–533 (EISADLADEEEITEDD) is linker. Positions 530–565 (TEDDIEDGFKNMFQQLAGEDMEISVFELKTILNRVI) constitute an EF-hand 1 domain. Positions 534–704 (IEDGFKNMFQ…LAEWLLLTMC (171 aa)) are domain IV. Ca(2+) contacts are provided by Asp-549, Glu-551, Glu-556, Asp-589, Asp-591, Ser-593, Arg-595, Glu-600, Asp-619, Asp-621, Ser-623, Thr-625, and Glu-630. 2 consecutive EF-hand domains span residues 606–641 (NKIRSWLTIFRQYDLDKSGTMSSYEMRMALESAGFK) and 671–705 (VKLETMFRFFHSMDRDGTGTAVMNLAEWLLLTMCG).

Belongs to the peptidase C2 family. Heterodimer of large (catalytic) and a small (regulatory) subunit. The cofactor is Ca(2+). In terms of processing, the N-terminus is blocked. Ubiquitously expressed.

The protein resides in the cytoplasm. The protein localises to the cell membrane. The enzyme catalyses Broad endopeptidase specificity.. With respect to regulation, activated by micromolar concentrations of calcium and inhibited by calpastatin. Its function is as follows. Calcium-regulated non-lysosomal thiol-protease which catalyze limited proteolysis of substrates involved in cytoskeletal remodeling and signal transduction. This is Calpain-1 catalytic subunit from Gallus gallus (Chicken).